A 488-amino-acid polypeptide reads, in one-letter code: Probable malate:quinone oxidoreductase (488 aa).

It belongs to the MQO family. FAD serves as cofactor.

It carries out the reaction (S)-malate + a quinone = a quinol + oxaloacetate. Its pathway is carbohydrate metabolism; tricarboxylic acid cycle; oxaloacetate from (S)-malate (quinone route): step 1/1. This chain is Probable malate:quinone oxidoreductase, found in Neisseria meningitidis serogroup C / serotype 2a (strain ATCC 700532 / DSM 15464 / FAM18).